The chain runs to 542 residues: Probable quinate permease (542 aa).

Residues 1-22 (MSILALVEDRPTPKEVYNWKIY) lie on the Cytoplasmic side of the membrane. Residues 23 to 43 (LLAAVASFTSCMIGYDSAFIG) form a helical membrane-spanning segment. Residues 44–74 (TTLALSSFREEFGFSTMSKTAVNLVSANIVS) are Extracellular-facing. Residues 75–95 (CYQAGAFFGAFFAYPIGHFWG) traverse the membrane as a helical segment. Topologically, residues 96 to 97 (RK) are cytoplasmic. A helical membrane pass occupies residues 98 to 118 (WGLLFAGTIFTLGAGLMLGAN). Residues 119 to 130 (GDRGLGLLYGGR) lie on the Extracellular side of the membrane. The chain crosses the membrane as a helical span at residues 131-151 (VLAGLGVGAGSNITPIYISEM). Residues 152–159 (APPSIRGR) are Cytoplasmic-facing. The chain crosses the membrane as a helical span at residues 160-180 (LVGVYELGWQIGGLVGFWINY). Residues 181–193 (GVSETLAPSHKQW) are Extracellular-facing. A helical transmembrane segment spans residues 194-214 (IIPFAVQLIPSGLLLIGAVFL). Residues 215–285 (KESPRWLFSR…AGTNKKVMYR (71 aa)) are Cytoplasmic-facing. The chain crosses the membrane as a helical span at residues 286 to 306 (LFLGSMLFFWQNGSGINAINY). At 307–325 (YSPTVFKSIGLHGANTSMF) the chain is on the extracellular side. A helical transmembrane segment spans residues 326–346 (STGIFGVVKTVVTFVWLLYLI). At 347–352 (DRVGRR) the chain is on the cytoplasmic side. A helical transmembrane segment spans residues 353–373 (LLLLIGAAGAAVCLLIVGAYI). At 374 to 387 (KIADPASNPTQEMT) the chain is on the extracellular side. Residues 388-408 (GGGIAAMFFFYLYTVFYTPSW) traverse the membrane as a helical segment. The Cytoplasmic segment spans residues 409–456 (NGTPWVMNSEMFEPNMRSLAQACAAASNWLWNFLISRFTPQMFAKMEY). The chain crosses the membrane as a helical span at residues 457–477 (GVWFFFASLMLLSIVFVFFLV). Residues 478 to 542 (PETKGIPLES…EHVSEDLPKV (65 aa)) lie on the Extracellular side of the membrane. Positions 523–542 (GYSKTGEQQVEHVSEDLPKV) are disordered. A compositionally biased stretch (basic and acidic residues) spans 531–542 (QVEHVSEDLPKV).

Belongs to the major facilitator superfamily. Sugar transporter (TC 2.A.1.1) family. Interacts with creB. Ubiquitinated. Deubiquitinated by creB, probably to control its activity or amount.

It localises to the cell membrane. Its function is as follows. Integral membrane transporter that imports quinic acid to be catabolized as a carbon source. This chain is Probable quinate permease (qutD), found in Aspergillus fumigatus (strain ATCC MYA-4609 / CBS 101355 / FGSC A1100 / Af293) (Neosartorya fumigata).